A 4306-amino-acid polypeptide reads, in one-letter code: Cytoplasmic dynein 2 heavy chain 1 (4306 aa).

A stem region spans residues 1–1650; sequence MAGSLGDVRK…YVQMVDSELQ (1650 aa). Position 145-152 (145-152) interacts with ATP; it reads LGIVLRKS. The stretch at 669-696 forms a coiled coil; it reads KELEGYIQKLQNAAERLATENRRLRKWH. AAA regions lie at residues 1651–1875, 1941–2161, 2249–2505, and 2617–2862; these read YTYE…VLRG, SALK…KQND, LTAD…WVLG, and HYGR…ESCK. Residues 1689 to 1696, 1979 to 1986, 2291 to 2298, and 2655 to 2662 contribute to the ATP site; these read GPAGTGKT, GPSGAGKS, GPEGCGKG, and GRSGVGRR. The segment at 2880–3168 is stalk; that stretch reads AISSSKKKEL…AEVSKAQETI (289 aa). Coiled coils occupy residues 2896 to 2981, 3108 to 3199, and 3407 to 3441; these read LQAG…KEVQ, LETE…LATL, and IQHE…SLLE. AAA stretches follow at residues 3243 to 3472 and 3689 to 3904; these read LCTE…LIQD and MALF…VIDR.

The protein belongs to the dynein heavy chain family. The cytoplasmic dynein complex 2 is probably composed by a heavy chain DYNC2H1 homodimer and a number of DYNC2LI1 light intermediate chains. In terms of tissue distribution, detected in brain, lung, spleen and kidney (at protein level). Enriched in the ependymal layer lining the lateral ventricles (at protein level).

It localises to the cytoplasm. The protein resides in the cytoskeleton. The protein localises to the cilium axoneme. It is found in the cell membrane. May function as a motor for intraflagellar retrograde transport. Functions in cilia biogenesis. According to PubMed:8666668, it may play a role in transport between endoplasmic reticulum and Golgi or organization of the Golgi in cells. The chain is Cytoplasmic dynein 2 heavy chain 1 (Dync2h1) from Mus musculus (Mouse).